Consider the following 291-residue polypeptide: 33 kDa chaperonin (291 aa).

Cystine bridges form between Cys-237-Cys-239 and Cys-270-Cys-273.

Belongs to the HSP33 family. Post-translationally, under oxidizing conditions two disulfide bonds are formed involving the reactive cysteines. Under reducing conditions zinc is bound to the reactive cysteines and the protein is inactive.

It is found in the cytoplasm. Redox regulated molecular chaperone. Protects both thermally unfolding and oxidatively damaged proteins from irreversible aggregation. Plays an important role in the bacterial defense system toward oxidative stress. This chain is 33 kDa chaperonin, found in Bacillus anthracis (strain A0248).